The primary structure comprises 151 residues: Large ribosomal subunit protein bL9 (151 aa).

Belongs to the bacterial ribosomal protein bL9 family.

In terms of biological role, binds to the 23S rRNA. This is Large ribosomal subunit protein bL9 from Lactobacillus helveticus (strain DPC 4571).